The chain runs to 405 residues: MSAQPISDFHAYPDAAGHFGKFGGRFVAETLIAPLQELSAAYDLARQDPAFIAEYDKDLKHYVGRPSPIYHAERLSREVGGAQILLKREDLNHTGAHKINNTIGQALLASRMGKTRIIAETGAGQHGVASATVAARLGLECVVYMGATDIERQKINVYRMQLLGAKVIPVTSGSATLKDALNEAMRDWVSNVQDTFYIIGTVAGPDPYPRMVRDFNAIVGREARAQMLEDYGRLPDAISACVGGGSNAIGLFHAFLNDPGVKIYGAEAAGDGIASGRHAASIAAGRPGVLHGNRTYVICDDDGQIIETHSVSAGLDYPGVGPEHAFLSDSGRAVYQGITDDEALAAFHLLAHTEGILAALESSHAVAQSIKLAREMPKDALVLCNLSGRGDKDVHTIAAREGMVL.

K98 is subject to N6-(pyridoxal phosphate)lysine.

The protein belongs to the TrpB family. In terms of assembly, tetramer of two alpha and two beta chains. The cofactor is pyridoxal 5'-phosphate.

The enzyme catalyses (1S,2R)-1-C-(indol-3-yl)glycerol 3-phosphate + L-serine = D-glyceraldehyde 3-phosphate + L-tryptophan + H2O. It participates in amino-acid biosynthesis; L-tryptophan biosynthesis; L-tryptophan from chorismate: step 5/5. Its function is as follows. The beta subunit is responsible for the synthesis of L-tryptophan from indole and L-serine. This chain is Tryptophan synthase beta chain, found in Xanthomonas campestris pv. campestris (strain 8004).